A 304-amino-acid polypeptide reads, in one-letter code: Phytol kinase 1, chloroplastic (304 aa).

Residues 1 to 59 (MAATLPLSPINHQLCRFGNNSLTTHRFCSPGFLISSPCFIGLTGMGSATQLRARRSLIS) constitute a chloroplast transit peptide. Helical transmembrane passes span 71-91 (VGATVAVLGGAYALVLSFESL), 105-125 (LVHILSGLLFVLAWPIFSGST), 129-149 (YFAAFVPLVNGLRLVINGLSI), 167-187 (ELLKGPLFYVLALLFSAVFFW), 191-211 (PIGMISLAMMCGGDGIADIMG), and 227-247 (WAGSISMFIFGFFISIALLYY).

The protein belongs to the polyprenol kinase family.

It localises to the plastid. The protein resides in the chloroplast membrane. The catalysed reaction is phytol + CTP = phytyl phosphate + CDP + H(+). Its pathway is cofactor biosynthesis; tocopherol biosynthesis. Its function is as follows. Kinase involved in the activation and reutilization of phytol from chlorophyll degradation in plant metabolism, including tocopherol biosynthesis. Catalyzes the conversion of phytol to phytol monophosphate (PMP) in the presence of CTP or UTP. No activity with ATP or GTP as phosphoryl donor. This Arabidopsis thaliana (Mouse-ear cress) protein is Phytol kinase 1, chloroplastic.